The chain runs to 398 residues: Leucine aminopeptidase 1 (398 aa).

The signal sequence occupies residues 1-20 (MKFLQTSLIAAALPAALVSG). A propeptide spanning residues 21-87 (RFVIENEGDN…LRAWTQSQAS (67 aa)) is cleaved from the precursor. A glycan (N-linked (GlcNAc...) asparagine) is linked at Asn179. Zn(2+)-binding residues include His187, Asp206, Glu245, and Asp272. Cys321 and Cys325 are joined by a disulfide. His354 contacts Zn(2+).

The protein belongs to the peptidase M28 family. M28E subfamily. As to quaternary structure, monomer. The cofactor is Zn(2+).

The protein localises to the secreted. Extracellular aminopeptidase that allows assimilation of proteinaceous substrates. This is Leucine aminopeptidase 1 (lap1) from Trichoderma harzianum (Hypocrea lixii).